The chain runs to 236 residues: EEF1A lysine methyltransferase 2 (236 aa).

Positions 1 to 11 are enriched in gly residues; sequence MSSGADGGGGA. The tract at residues 1–31 is disordered; sequence MSSGADGGGGAAVAARSDKGSPGEDGFVPSA. The residue at position 2 (Ser-2) is an N-acetylserine. Position 21 is a phosphoserine (Ser-21).

Belongs to the class I-like SAM-binding methyltransferase superfamily. EFM4 family.

It is found in the cytoplasm. It localises to the nucleus. The enzyme catalyses L-lysyl-[protein] + 3 S-adenosyl-L-methionine = N(6),N(6),N(6)-trimethyl-L-lysyl-[protein] + 3 S-adenosyl-L-homocysteine + 3 H(+). Functionally, protein-lysine methyltransferase that selectively catalyzes the trimethylation of EEF1A at 'Lys-318'. The polypeptide is EEF1A lysine methyltransferase 2 (Homo sapiens (Human)).